A 415-amino-acid chain; its full sequence is Probable glucuronosyltransferase Os03g0287800 (415 aa).

Topologically, residues 1 to 25 (MGSSTDHGGAGGRGKKGSGSQLWKK) are cytoplasmic. The helical; Signal-anchor for type II membrane protein transmembrane segment at 26–43 (ALLHSSLCFVMGFFTGFA) threads the bilayer. At 44 to 415 (PSSVSDWTSA…GGRFLSGDFC (372 aa)) the chain is on the lumenal side. Residues Asn78, Asn165, Asn257, and Asn287 are each glycosylated (N-linked (GlcNAc...) asparagine).

The protein belongs to the glycosyltransferase 43 family.

Its subcellular location is the golgi apparatus membrane. In terms of biological role, involved in the synthesis of glucuronoxylan hemicellulose in secondary cell walls. The polypeptide is Probable glucuronosyltransferase Os03g0287800 (Oryza sativa subsp. japonica (Rice)).